Reading from the N-terminus, the 614-residue chain is MDGKVAVQECGPPAVSWVPEEGEKLDQEDEDQVKDRGQWTNKMEFVLSVAGEIIGLGNVWRFPYLCYKNGGGAFFIPYFIFFFVCGIPVFFLEVALGQYTSQGSVTAWRKICPLFQGIGLASVVIESYLNVYYIIILAWALFYLFSSFTSELPWTTCNNFWNTEHCTDFLNHSGAGTVTPFENFTSPVMEFWERRVLGITSGIHDLGSLRWELALCLLLAWVICYFCIWKGVKSTGKVVYFTATFPYLMLVILLIRGVTLPGAYQGIIYYLKPDLFRLKDPQVWMDAGTQIFFSFAICQGCLTALGSYNKYHNNCYKDCIALCFLNSATSFVAGFVVFSILGFMSQEQGVPISEVAESGPGLAFIAFPKAVTMMPLSQLWSCLFFIMLIFLGLDSQFVCVECLVTASIDMFPRQLRKSGRRELLILTIAVMCYLIGLFLVTEGGMYIFQLFDYYASSGICLLFLSLFEVVCISWVYGADRFYDNIEDMIGYRPWPLVKISWLFLTPGLCLATFLFSLSKYTPLKYNNVYVYPPWGYSIGWFLALSSMVCVPLFVVITLLKTRGPFRKRLRQLITPDSSLPQPKQHPCLDGSAGRNFGPSPTREGLIAGEKETHL.

The Cytoplasmic portion of the chain corresponds to 1–44; that stretch reads MDGKVAVQECGPPAVSWVPEEGEKLDQEDEDQVKDRGQWTNKME. Transmembrane regions (helical) follow at residues 45–65, 73–92, and 117–137; these read FVLS…FPYL, AFFI…VFFL, and GIGL…IIIL. The Extracellular portion of the chain corresponds to 138–210; sequence AWALFYLFSS…SGIHDLGSLR (73 aa). A disulfide bond links Cys-157 and Cys-166. 2 N-linked (GlcNAc...) asparagine glycosylation sites follow: Asn-171 and Asn-183. 9 helical membrane-spanning segments follow: residues 211 to 229, 238 to 255, 291 to 308, 320 to 341, 374 to 393, 423 to 441, 458 to 478, 499 to 518, and 538 to 556; these read WELA…FCIW, VVYF…ILLI, IFFS…LGSY, IALC…FSIL, MPLS…FLGL, LLIL…FLVT, GICL…VYGA, ISWL…FSLS, and IGWF…FVVI. The Cytoplasmic portion of the chain corresponds to 557–614; sequence TLLKTRGPFRKRLRQLITPDSSLPQPKQHPCLDGSAGRNFGPSPTREGLIAGEKETHL. The tract at residues 576 to 614 is disordered; it reads DSSLPQPKQHPCLDGSAGRNFGPSPTREGLIAGEKETHL.

This sequence belongs to the sodium:neurotransmitter symporter (SNF) (TC 2.A.22) family. SLC6A12 subfamily. Interacts with LIN7C. As to expression, expressed in kidney, liver, heart, skeletal muscle, placenta, and a widespread distribution in the brain.

Its subcellular location is the basolateral cell membrane. It is found in the cell membrane. The catalysed reaction is 4-aminobutanoate(out) + chloride(out) + 3 Na(+)(out) = 4-aminobutanoate(in) + chloride(in) + 3 Na(+)(in). It carries out the reaction glycine betaine(out) + 2 chloride(out) + 3 Na(+)(out) = glycine betaine(in) + 2 chloride(in) + 3 Na(+)(in). Functionally, transporter that mediates cellular uptake of betaine and GABA in a sodium- and chloride-dependent process. May have a role in regulation of GABAergic transmission in the brain through the reuptake of GABA into presynaptic terminals, as well as in osmotic regulation. Probably also involved in renal and hepatic osmotic regulation. This Homo sapiens (Human) protein is Sodium- and chloride-dependent betaine transporter.